The primary structure comprises 1477 residues: Neuralized-like protein 4 (1477 aa).

Disordered regions lie at residues 1 to 26 and 168 to 196; these read MAEL…RKQP and QPPP…RPDK. In terms of domain architecture, NHR 1 spans 1–167; it reads MAELHPRTGK…KCTQITVLSC (167 aa). A compositionally biased stretch (acidic residues) spans 171–183; that stretch reads PEEEEEEDAEEQE. NHR domains are found at residues 250–417, 450–616, 645–813, and 841–1010; these read ALLF…IVHN, QLLF…IMDE, DLRF…LTGG, and SHRF…TVSS. The segment at 1012–1041 is disordered; sequence LLEEPDATKPPSITSESEEEEDPADHGDPH. The 164-residue stretch at 1048-1211 folds into the NHR 6 domain; that stretch reads SLQFLANHGK…QCEQVSIVTG (164 aa).

Post-translationally, ubiquitinated. This ubiquitination leads to proteasomal degradation.

It localises to the cytoplasm. It is found in the cytoskeleton. Its subcellular location is the microtubule organizing center. The protein resides in the centrosome. The protein localises to the centriole. In terms of biological role, promotes CCP110 ubiquitination and proteasome-dependent degradation. By counteracting accumulation of CP110, maintains normal centriolar homeostasis and preventing formation of ectopic microtubular organizing centers. The chain is Neuralized-like protein 4 (neurl4) from Xenopus tropicalis (Western clawed frog).